Reading from the N-terminus, the 321-residue chain is Lipoyl synthase (321 aa).

Residues Cys-68, Cys-73, Cys-79, Cys-94, Cys-98, Cys-101, and Ser-308 each contribute to the [4Fe-4S] cluster site. Residues 80 to 297 enclose the Radical SAM core domain; the sequence is FNHGTATFMI…KDVAMGLGFS (218 aa).

The protein belongs to the radical SAM superfamily. Lipoyl synthase family. It depends on [4Fe-4S] cluster as a cofactor.

The protein localises to the cytoplasm. The catalysed reaction is [[Fe-S] cluster scaffold protein carrying a second [4Fe-4S](2+) cluster] + N(6)-octanoyl-L-lysyl-[protein] + 2 oxidized [2Fe-2S]-[ferredoxin] + 2 S-adenosyl-L-methionine + 4 H(+) = [[Fe-S] cluster scaffold protein] + N(6)-[(R)-dihydrolipoyl]-L-lysyl-[protein] + 4 Fe(3+) + 2 hydrogen sulfide + 2 5'-deoxyadenosine + 2 L-methionine + 2 reduced [2Fe-2S]-[ferredoxin]. Its pathway is protein modification; protein lipoylation via endogenous pathway; protein N(6)-(lipoyl)lysine from octanoyl-[acyl-carrier-protein]: step 2/2. Functionally, catalyzes the radical-mediated insertion of two sulfur atoms into the C-6 and C-8 positions of the octanoyl moiety bound to the lipoyl domains of lipoate-dependent enzymes, thereby converting the octanoylated domains into lipoylated derivatives. This chain is Lipoyl synthase, found in Aeromonas hydrophila subsp. hydrophila (strain ATCC 7966 / DSM 30187 / BCRC 13018 / CCUG 14551 / JCM 1027 / KCTC 2358 / NCIMB 9240 / NCTC 8049).